The primary structure comprises 105 residues: Protein METHYLENE BLUE SENSITIVITY 1 (105 aa).

The disordered stretch occupies residues 26 to 46 (RGGGKAGIADRTGKEKGGHAK). Positions 36–46 (RTGKEKGGHAK) are enriched in basic and acidic residues.

As to expression, mainly expressed in the epidermis.

The protein resides in the nucleus. The protein localises to the cytoplasm. Its subcellular location is the stress granule. In terms of biological role, required for acclimation to reactive oxygen species (ROS) responses downstream of beta-cyclocitral (beta-cc) or mediated by dihydroactinidiolide, including singlet oxygen 1O(2) detoxification reactions, especially upon light-mediated photooxidative stress, and leading to programmed cell death. Prevents leaf senescence. Involved in cold acclimation. The chain is Protein METHYLENE BLUE SENSITIVITY 1 from Arabidopsis thaliana (Mouse-ear cress).